A 779-amino-acid chain; its full sequence is Ribonucleoside-diphosphate reductase large subunit (779 aa).

Substrate-binding positions include Ser-178, 193 to 194, Gly-222, 420 to 424, and 614 to 618; these read SC, NLCIE, and PTATS. Residues Cys-194 and Cys-440 are joined by a disulfide bond. Asn-420 serves as the catalytic Proton acceptor. Cys-422 (cysteine radical intermediate) is an active-site residue. Catalysis depends on Glu-424, which acts as the Proton acceptor.

The protein belongs to the ribonucleoside diphosphate reductase large chain family. In terms of assembly, heterotetramer composed of a homodimer of the large subunit (R1) and a homodimer of the small subunit (R2). Larger multisubunit protein complex are also active, composed of (R1)n(R2)n.

It carries out the reaction a 2'-deoxyribonucleoside 5'-diphosphate + [thioredoxin]-disulfide + H2O = a ribonucleoside 5'-diphosphate + [thioredoxin]-dithiol. Under complex allosteric control mediated by deoxynucleoside triphosphates and ATP binding. The type of nucleotide bound at the specificity site determines substrate preference. It seems probable that ATP makes the enzyme reduce CDP and UDP, dGTP favors ADP reduction and dTTP favors GDP reduction. In terms of biological role, ribonucleoside-diphosphate reductase holoenzyme provides the precursors necessary for viral DNA synthesis. Allows virus growth in non-dividing cells. Catalyzes the biosynthesis of deoxyribonucleotides from the corresponding ribonucleotides. The sequence is that of Ribonucleoside-diphosphate reductase large subunit from African swine fever virus (isolate Tick/Malawi/Lil 20-1/1983) (ASFV).